A 269-amino-acid polypeptide reads, in one-letter code: MATTYDWSQRKIMVPEKEEIALSTNDLRVFYNGTKEAIHGVTMSFPKNEITALIGPSGSGKSTYLRALNRMNDTIDGARVTGEINYEGVNINENKVNVFEVRKQIGMVFQRPNPFPKSIYENIAFIHRRDGVRDRKKLDEIVETSLKQAALWDQVKDNLNQSALAMSGGQAQRLCIARALSVKPEIILMDEPASALDPISTMQIEETMMELKENYTIIIVTHNMAQASRASDNTAFFYSGDLIEYDKTSTIFTQPSLQSTEDYVSGHFG.

The ABC transporter domain maps to 22 to 264 (LSTNDLRVFY…PSLQSTEDYV (243 aa)). 55-62 (GPSGSGKS) is an ATP binding site.

This sequence belongs to the ABC transporter superfamily. Phosphate importer (TC 3.A.1.7) family. In terms of assembly, the complex is composed of two ATP-binding proteins (PstB), two transmembrane proteins (PstC and PstA) and a solute-binding protein (PstS).

It is found in the cell membrane. The catalysed reaction is phosphate(out) + ATP + H2O = ADP + 2 phosphate(in) + H(+). Its function is as follows. Part of the ABC transporter complex PstSACB involved in phosphate import. Responsible for energy coupling to the transport system. The polypeptide is Phosphate import ATP-binding protein PstB 2 (Lactococcus lactis subsp. lactis (strain IL1403) (Streptococcus lactis)).